The following is a 1128-amino-acid chain: Translation initiation factor IF-2 (1128 aa).

The tract at residues 57 to 519 is disordered; the sequence is NSDKQILSIN…KETTRQRQKR (463 aa). Residues 70 to 83 show a composition bias toward basic and acidic residues; that stretch reads NKKDNYKQNKEDKS. The span at 100-110 shows a compositional bias: low complexity; sequence KKQLLNKPLNK. Positions 120-146 are enriched in polar residues; it reads QLKNPNKPNIYNSSQSQANLTNQNTKS. Residues 147–158 are compositionally biased toward basic and acidic residues; it reads KPSEHFNKDKKT. Residues 182–196 show a composition bias toward low complexity; it reads KNINNNLKSNESSKN. Residues 201–214 show a composition bias toward basic and acidic residues; it reads GDKRELSLKPDQNR. Composition is skewed to polar residues over residues 243–267 and 386–397; these read KQNN…NRPG and AKTNNQKQNIES. The segment covering 432-445 has biased composition (basic and acidic residues); the sequence is RKDWDDSAKLEALR. Over residues 499–519 the composition is skewed to basic residues; that stretch reads HKSTKQFKKKKKETTRQRQKR. Positions 620–792 constitute a tr-type G domain; that stretch reads KRPPVITVMG…ILLVSEVEDL (173 aa). The G1 stretch occupies residues 629-636; sequence GHVDHGKT. 629–636 is a binding site for GTP; the sequence is GHVDHGKT. Residues 654-658 form a G2 region; sequence GITQH. Residues 679–682 form a G3 region; sequence DTPG. Residues 679 to 683 and 733 to 736 contribute to the GTP site; these read DTPGH and NKID. The G4 stretch occupies residues 733 to 736; it reads NKID. The segment at 769-771 is G5; it reads SAI.

Belongs to the TRAFAC class translation factor GTPase superfamily. Classic translation factor GTPase family. IF-2 subfamily.

It localises to the cytoplasm. In terms of biological role, one of the essential components for the initiation of protein synthesis. Protects formylmethionyl-tRNA from spontaneous hydrolysis and promotes its binding to the 30S ribosomal subunits. Also involved in the hydrolysis of GTP during the formation of the 70S ribosomal complex. This is Translation initiation factor IF-2 from Prochlorococcus marinus (strain MIT 9312).